Consider the following 276-residue polypeptide: Release factor glutamine methyltransferase (276 aa).

Residues Gly117–Gly121, Asp140, Trp168, and Asn182 each bind S-adenosyl-L-methionine. Asn182–Tyr185 is a substrate binding site.

It belongs to the protein N5-glutamine methyltransferase family. PrmC subfamily.

It catalyses the reaction L-glutaminyl-[peptide chain release factor] + S-adenosyl-L-methionine = N(5)-methyl-L-glutaminyl-[peptide chain release factor] + S-adenosyl-L-homocysteine + H(+). In terms of biological role, methylates the class 1 translation termination release factors RF1/PrfA and RF2/PrfB on the glutamine residue of the universally conserved GGQ motif. This is Release factor glutamine methyltransferase from Yersinia pestis.